A 24-amino-acid chain; its full sequence is Brevinin-1Pd (24 aa).

Cysteine 18 and cysteine 24 are joined by a disulfide.

In terms of tissue distribution, expressed by the skin glands.

It is found in the secreted. Its function is as follows. Antibacterial activity against Gram-positive bacterium S.aureus and Gram-negative bacterium E.coli. Has activity against C.albicans. The polypeptide is Brevinin-1Pd (Lithobates pipiens (Northern leopard frog)).